The chain runs to 383 residues: Protein delta homolog 2 (383 aa).

An N-terminal signal peptide occupies residues 1 to 26 (MPSGCRCLHLVCLLCILGAPVKPARG). EGF-like domains lie at 27–58 (NDCS…LHCE), 62–89 (RMPG…KFCD), 91–129 (DEHI…RDCE), and 131–172 (KAGP…ARCE). The Extracellular segment spans residues 27–306 (NDCSSLCDLA…RQEAGLGEPS (280 aa)). Cystine bridges form between Cys-29–Cys-40, Cys-33–Cys-46, Cys-48–Cys-57, Cys-66–Cys-71, Cys-79–Cys-88, Cys-95–Cys-107, Cys-101–Cys-117, Cys-119–Cys-128, Cys-135–Cys-148, Cys-142–Cys-160, Cys-162–Cys-171, Cys-178–Cys-189, Cys-183–Cys-198, Cys-200–Cys-209, Cys-216–Cys-227, Cys-221–Cys-236, and Cys-238–Cys-247. N-linked (GlcNAc...) asparagine glycosylation is present at Asn-157. One can recognise an EGF-like 5; calcium-binding domain in the interval 174–210 (NVDDCLMRPCANGATCLDGINRFSCLCPEGFTGRFCT). An EGF-like 6; calcium-binding domain is found at 212-248 (NLDDCASRPCQRGARCRDRVHDFDCLCPSGYGGKTCE). The helical transmembrane segment at 307 to 327 (LVAVVVFGAVTAALVLSTVLL) threads the bilayer. Residues 328–383 (TLRAWRRGFCPPGPCCYPAPHYAPARQDQECQVSMLPTGLPLPPDLPPEPGKTTAL) lie on the Cytoplasmic side of the membrane. Residues 364 to 383 (PTGLPLPPDLPPEPGKTTAL) are disordered. A compositionally biased stretch (pro residues) spans 367–377 (LPLPPDLPPEP).

It localises to the membrane. Functionally, regulates adipogenesis. The sequence is that of Protein delta homolog 2 (DLK2) from Bos taurus (Bovine).